The chain runs to 189 residues: Flavin prenyltransferase UbiX (189 aa).

FMN contacts are provided by residues 11–13 (GAS), Ser-37, 88–91 (SMRT), and Arg-123. Tyr-153 provides a ligand contact to dimethylallyl phosphate.

The protein belongs to the UbiX/PAD1 family.

It carries out the reaction dimethylallyl phosphate + FMNH2 = prenylated FMNH2 + phosphate. Functionally, flavin prenyltransferase that catalyzes the synthesis of the prenylated FMN cofactor (prenyl-FMN) for 4-hydroxy-3-polyprenylbenzoic acid decarboxylase UbiD. The prenyltransferase is metal-independent and links a dimethylallyl moiety from dimethylallyl monophosphate (DMAP) to the flavin N5 and C6 atoms of FMN. The protein is Flavin prenyltransferase UbiX of Neisseria meningitidis serogroup B (strain ATCC BAA-335 / MC58).